A 179-amino-acid chain; its full sequence is Apoptosis regulator Bcl-2 homolog (179 aa).

A BH1 motif is present at residues 76–95 (ELFKDLINWGRICGFIVFSA). The short motif at 126–141 (PWMISHGGQEEFLAFS) is the BH2 element.

Belongs to the Bcl-2 family. As to quaternary structure, interacts with host BECN1 (via BH3 homology domain); this interaction allows the virus to inhibit BECN1, and thus autophagy. Interacts with host BID. Interacts with host BAX.

It is found in the host mitochondrion. It localises to the host endoplasmic reticulum. In terms of biological role, suppresses apoptosis in host cell to promote the viral replication. Has the ability to potentially bind to all the members of the proapoptotic Bcl-2 family. Inhibits autophagy by interacting with host Beclin 1 (BECN1). The chain is Apoptosis regulator Bcl-2 homolog from African swine fever virus (isolate Tick/South Africa/Pretoriuskop Pr4/1996) (ASFV).